We begin with the raw amino-acid sequence, 126 residues long: Large ribosomal subunit protein uL22 (126 aa).

This sequence belongs to the universal ribosomal protein uL22 family. In terms of assembly, part of the 50S ribosomal subunit.

This protein binds specifically to 23S rRNA; its binding is stimulated by other ribosomal proteins, e.g. L4, L17, and L20. It is important during the early stages of 50S assembly. It makes multiple contacts with different domains of the 23S rRNA in the assembled 50S subunit and ribosome. In terms of biological role, the globular domain of the protein is located near the polypeptide exit tunnel on the outside of the subunit, while an extended beta-hairpin is found that lines the wall of the exit tunnel in the center of the 70S ribosome. The polypeptide is Large ribosomal subunit protein uL22 (Zymomonas mobilis subsp. mobilis (strain ATCC 31821 / ZM4 / CP4)).